Here is a 219-residue protein sequence, read N- to C-terminus: Peptide methionine sulfoxide reductase MsrA (219 aa).

The interval 1–20 (MGLFRSPRQNLPTAADALPG) is disordered. The active site involves Cys55.

The protein belongs to the MsrA Met sulfoxide reductase family.

The catalysed reaction is L-methionyl-[protein] + [thioredoxin]-disulfide + H2O = L-methionyl-(S)-S-oxide-[protein] + [thioredoxin]-dithiol. It carries out the reaction [thioredoxin]-disulfide + L-methionine + H2O = L-methionine (S)-S-oxide + [thioredoxin]-dithiol. Functionally, has an important function as a repair enzyme for proteins that have been inactivated by oxidation. Catalyzes the reversible oxidation-reduction of methionine sulfoxide in proteins to methionine. This Rhodospirillum centenum (strain ATCC 51521 / SW) protein is Peptide methionine sulfoxide reductase MsrA.